Reading from the N-terminus, the 405-residue chain is MTLSPADQSKLEGFWQHCVTHQYFNIGYPESADFDYSQLHRFLQFSINNLLGTGNEYSNYLLNSFDFEKDVMTYFAELFNIALEDSWGYVTNGGTEGNMFGCYLGRELFPDGTLYYSKDTHYSVAKIVKLLRIKCRAVESLPNGEIDYDDLMAKITADQERHPIIFANIGTTMRGALDNIVTIQQRLQQAGIARHDYYLHADAALSGMILPFVDHPQPFSFADGIDSICVSGHKMIGSPIPCGIVVAKRNNVARISVEVDYIRAHDKTISGSRNGHTPLMMWAALRSYSWAEWRHRIKHSLDTAQYAVDRFQASGIDAWRNENSITVVFPCPSERIATKYCLATSGNSAHLITTPHHHDCSMIDALIDEVVAEAQLNTLRSKRAFTEQTVVERLPAASFNLRTHY.

H121 is a binding site for substrate. Residue K234 is modified to N6-(pyridoxal phosphate)lysine.

It belongs to the group II decarboxylase family. In terms of assembly, homotetramer. Pyridoxal 5'-phosphate is required as a cofactor.

It catalyses the reaction L-histidine + H(+) = histamine + CO2. It participates in siderophore biosynthesis; pseudomonine biosynthesis. This is Histidine decarboxylase from Pseudomonas fluorescens.